The sequence spans 453 residues: Aldehyde dehydrogenase, dimeric NADP-preferring (453 aa).

Position 2 is an N-acetylserine (Ser2). Residue Lys178 is modified to N6-acetyllysine. Position 188–193 (188–193) interacts with NAD(+); that stretch reads GSTAVG. Lys194 carries the post-translational modification N6-acetyllysine. Residues Glu210 and Cys244 contribute to the active site.

It belongs to the aldehyde dehydrogenase family. Homodimer. Constitutively expressed in cornea, stomach, skin, bladder and lungs. Lowest expression levels in lungs and bladder.

The protein resides in the cytoplasm. The enzyme catalyses an aldehyde + NAD(+) + H2O = a carboxylate + NADH + 2 H(+). The catalysed reaction is octanal + NAD(+) + H2O = octanoate + NADH + 2 H(+). Its function is as follows. ALDHs play a major role in the detoxification of alcohol-derived acetaldehyde. They are involved in the metabolism of corticosteroids, biogenic amines, neurotransmitters, and lipid peroxidation. Oxidizes medium and long chain aldehydes into non-toxic fatty acids. Preferentially oxidizes aromatic aldehyde substrates. Comprises about 50 percent of corneal epithelial soluble proteins. May play a role in preventing corneal damage caused by ultraviolet light. The protein is Aldehyde dehydrogenase, dimeric NADP-preferring (Aldh3a1) of Mus musculus (Mouse).